The following is a 757-amino-acid chain: Amine oxidase [copper-containing] 2 (757 aa).

The Cytoplasmic segment spans residues 1-4; the sequence is MNLK. A helical transmembrane segment spans residues 5-25; sequence VLLLLLGLSFLTVFALVYVLL. The Extracellular portion of the chain corresponds to 26 to 757; the sequence is TRQGSFSQSP…NLPSFSYEGL (732 aa). Residues Asn133, Asn198, and Asn226 are each glycosylated (N-linked (GlcNAc...) asparagine). Asp381 (proton acceptor) is an active-site residue. Residues Cys399 and Cys425 are joined by a disulfide bond. Residue Tyr466 is the Schiff-base intermediate with substrate; via topaquinone of the active site. Tyr466 is subject to 2',4',5'-topaquinone. Residues His517 and His519 each coordinate Cu(2+). Ca(2+)-binding residues include Asp526, Leu527, Asp528, Glu569, Glu638, Phe660, and Asn662. A glycan (N-linked (GlcNAc...) asparagine) is linked at Asn663. Positions 664, 670, and 671 each coordinate Ca(2+). Residue His681 participates in Cu(2+) binding. A disulfide bond links Cys731 and Cys738.

It belongs to the copper/topaquinone oxidase family. As to quaternary structure, homodimer; disulfide-linked. Probably forms heterodimers with AOC3. Cu(2+) serves as cofactor. Requires Ca(2+) as cofactor. It depends on L-topaquinone as a cofactor. In terms of processing, topaquinone (TPQ) is generated by copper-dependent autoxidation of a specific tyrosyl residue. Significantly much highly expressed in retina.

It localises to the cell membrane. The enzyme catalyses 2-phenylethylamine + O2 + H2O = 2-phenylacetaldehyde + H2O2 + NH4(+). The catalysed reaction is tryptamine + O2 + H2O = indole-3-acetaldehyde + H2O2 + NH4(+). It catalyses the reaction tyramine + O2 + H2O = (4-hydroxyphenyl)acetaldehyde + H2O2 + NH4(+). Its function is as follows. Catalyzes the oxidative deamination of primary amines to the corresponding aldehydes with the concomitant production of hydrogen peroxide and ammonia. Has a preference for 2-phenylethylamine, tryptamine and tyramine. Could also act on methylamine and benzylamine but much less efficiently. The chain is Amine oxidase [copper-containing] 2 from Mus musculus (Mouse).